Reading from the N-terminus, the 236-residue chain is UPF0257 lipoprotein YnfC (236 aa).

The first 16 residues, 1-16, serve as a signal peptide directing secretion; that stretch reads MKKPLLLTLLCMILAG. Residue cysteine 17 is the site of N-palmitoyl cysteine attachment. The S-diacylglycerol cysteine moiety is linked to residue cysteine 17.

The protein belongs to the UPF0257 family.

It is found in the cell membrane. This is UPF0257 lipoprotein YnfC from Salmonella heidelberg (strain SL476).